The following is a 159-amino-acid chain: SsrA-binding protein (159 aa).

The interval K137–R159 is disordered.

This sequence belongs to the SmpB family.

Its subcellular location is the cytoplasm. In terms of biological role, required for rescue of stalled ribosomes mediated by trans-translation. Binds to transfer-messenger RNA (tmRNA), required for stable association of tmRNA with ribosomes. tmRNA and SmpB together mimic tRNA shape, replacing the anticodon stem-loop with SmpB. tmRNA is encoded by the ssrA gene; the 2 termini fold to resemble tRNA(Ala) and it encodes a 'tag peptide', a short internal open reading frame. During trans-translation Ala-aminoacylated tmRNA acts like a tRNA, entering the A-site of stalled ribosomes, displacing the stalled mRNA. The ribosome then switches to translate the ORF on the tmRNA; the nascent peptide is terminated with the 'tag peptide' encoded by the tmRNA and targeted for degradation. The ribosome is freed to recommence translation, which seems to be the essential function of trans-translation. This is SsrA-binding protein from Cellvibrio japonicus (strain Ueda107) (Pseudomonas fluorescens subsp. cellulosa).